A 598-amino-acid polypeptide reads, in one-letter code: Nuclear receptor subfamily 4 group A member 1 (598 aa).

Disordered regions lie at residues methionine 1–leucine 50 and leucine 120–glycine 159. 2 stretches are compositionally biased toward low complexity: residues leucine 37–leucine 50 and serine 134–serine 145. The segment at arginine 171 to serine 466 is required for nuclear import. Residues glutamate 264–threonine 339 constitute a DNA-binding region (nuclear receptor). NR C4-type zinc fingers lie at residues cysteine 267 to cysteine 287 and cysteine 303 to cysteine 327. Residues alanine 268–lysine 354 are required for binding NBRE-containing DNA. The tract at residues alanine 299–proline 361 is required for the interaction with RXRA. Serine 341 is subject to Phosphoserine; by PKA. The segment at serine 341–proline 361 is disordered. Position 351 is a phosphoserine; by PKA, RPS6KA1 and RPS6KA3 (serine 351). One can recognise an NR LBD domain in the interval serine 360–threonine 595. Residues proline 521 to glycine 544 form a binds lipopolysaccharide region. Residues proline 584–threonine 595 form an AF-2 region.

It belongs to the nuclear hormone receptor family. NR4 subfamily. In terms of assembly, binds the NGFI-B response element (NBRE) as a monomer. Binds the Nur response element (NurRE), consisting of two inverse NBRE-related octanucleotide repeats separated by 6 base-pairs, as a dimer. Interacts (via N-terminus) with NLRP3 (via LRR repeat domain); the interaction is direct, requires binding of NR4A1/Nur77 to NBRE-containing dsDNA and lipopolysaccharide, and leads to non-canonical NLRP3 inflammasome activation. Interacts with GADD45GIP1. Interacts with STK11. Heterodimer (via DNA-binding domain) with RXRA (via C-terminus); DNA-binding of the heterodimer is enhanced by 9-cis retinoic acid. Competes for the RXRA interaction with EP300 and thereby attenuates EP300 mediated acetylation of RXRA. Interacts with NCOA1. Interacts with NCOA2. Interacts with NCOA3. Zn(2+) serves as cofactor. Post-translationally, phosphorylated at Ser-351 by RPS6KA1 and RPS6KA3 in response to mitogenic or stress stimuli. Acetylated by p300/CBP, acetylation increases stability. Deacetylated by HDAC1.

Its subcellular location is the cytoplasm. It localises to the cytosol. It is found in the nucleus. The protein localises to the mitochondrion. Functionally, orphan nuclear receptor. Binds the NGFI-B response element (NBRE) 5'-AAAGGTCA-3'. Binds 9-cis-retinoic acid outside of its ligand-binding (NR LBD) domain. Participates in energy homeostasis by sequestrating the kinase STK11 in the nucleus, thereby attenuating cytoplasmic AMPK activation. Regulates the inflammatory response in macrophages by regulating metabolic adaptations during inflammation, including repressing the transcription of genes involved in the citric acid cycle (TCA). Inhibits NF-kappa-B signaling by binding to low-affinity NF-kappa-B binding sites, such as at the IL2 promoter. May act concomitantly with NR4A2 in regulating the expression of delayed-early genes during liver regeneration. Plays a role in the vascular response to injury. Its function is as follows. In the cytosol, upon its detection of both bacterial lipopolysaccharide (LPS) and NBRE-containing mitochondrial DNA released by GSDMD pores during pyroptosis, it promotes non-canonical NLRP3 inflammasome activation by stimulating association of NLRP3 and NEK7. This chain is Nuclear receptor subfamily 4 group A member 1 (NR4A1), found in Canis lupus familiaris (Dog).